A 252-amino-acid chain; its full sequence is MHGAKVHLNGANPLTDLPSINAVRDIREATCGPVGAPNVTNELSENIILTSLDDLHNWARLSSLWPLLYGTACCFIEFAALIGSRFDFDRFGLVPRSSPRQADLLIVAGTVTMKMAPALVRLYEQMPDPKYVIAMGACTITGGMFSADSTTAVRGVDKLIPVDLYLPGCPPRPEAIFDAVIKLRKKVGNESFQEREKMLQKHRYFSVPHKMKRVQSQVTGAYLNASTQKQALSPSQEIPLEDQNEATKEIAQ.

[4Fe-4S] cluster is bound by residues C73, C74, C138, and C169. A compositionally biased stretch (polar residues) spans 225–236 (ASTQKQALSPSQ). A disordered region spans residues 225 to 252 (ASTQKQALSPSQEIPLEDQNEATKEIAQ).

Belongs to the complex I 20 kDa subunit family. As to quaternary structure, NDH-1 can be composed of about 15 different subunits; different subcomplexes with different compositions have been identified which probably have different functions. Requires [4Fe-4S] cluster as cofactor.

Its subcellular location is the cellular thylakoid membrane. The catalysed reaction is a plastoquinone + NADH + (n+1) H(+)(in) = a plastoquinol + NAD(+) + n H(+)(out). It catalyses the reaction a plastoquinone + NADPH + (n+1) H(+)(in) = a plastoquinol + NADP(+) + n H(+)(out). Functionally, NDH-1 shuttles electrons from an unknown electron donor, via FMN and iron-sulfur (Fe-S) centers, to quinones in the respiratory and/or the photosynthetic chain. The immediate electron acceptor for the enzyme in this species is believed to be plastoquinone. Couples the redox reaction to proton translocation, and thus conserves the redox energy in a proton gradient. Cyanobacterial NDH-1 also plays a role in inorganic carbon-concentration. This Prochlorococcus marinus (strain MIT 9211) protein is NAD(P)H-quinone oxidoreductase subunit K.